The following is a 365-amino-acid chain: Carbamoyl phosphate synthase small chain (365 aa).

CPSase regions lie at residues 1 to 166 (MKRQ…PSPG) and 1 to 169 (MKRQ…GRGH). Serine 45, glycine 218, and glycine 220 together coordinate L-glutamine. A Glutamine amidotransferase type-1 domain is found at 170–357 (RVVLVDFGMK…LTMIENFKKE (188 aa)). Residue cysteine 245 is the Nucleophile of the active site. L-glutamine-binding residues include leucine 246, glutamine 249, asparagine 287, glycine 289, and tyrosine 290. Catalysis depends on residues histidine 330 and glutamate 332.

Belongs to the CarA family. Composed of two chains; the small (or glutamine) chain promotes the hydrolysis of glutamine to ammonia, which is used by the large (or ammonia) chain to synthesize carbamoyl phosphate. Tetramer of heterodimers (alpha,beta)4.

The catalysed reaction is hydrogencarbonate + L-glutamine + 2 ATP + H2O = carbamoyl phosphate + L-glutamate + 2 ADP + phosphate + 2 H(+). The enzyme catalyses L-glutamine + H2O = L-glutamate + NH4(+). Its pathway is amino-acid biosynthesis; L-arginine biosynthesis; carbamoyl phosphate from bicarbonate: step 1/1. It functions in the pathway pyrimidine metabolism; UMP biosynthesis via de novo pathway; (S)-dihydroorotate from bicarbonate: step 1/3. Its function is as follows. Small subunit of the glutamine-dependent carbamoyl phosphate synthetase (CPSase). CPSase catalyzes the formation of carbamoyl phosphate from the ammonia moiety of glutamine, carbonate, and phosphate donated by ATP, constituting the first step of 2 biosynthetic pathways, one leading to arginine and/or urea and the other to pyrimidine nucleotides. The small subunit (glutamine amidotransferase) binds and cleaves glutamine to supply the large subunit with the substrate ammonia. In Bacillus cereus (strain ZK / E33L), this protein is Carbamoyl phosphate synthase small chain.